The sequence spans 589 residues: Glutamine--fructose-6-phosphate aminotransferase [isomerizing] (589 aa).

Residue Cys-2 is the Nucleophile; for GATase activity of the active site. A Glutamine amidotransferase type-2 domain is found at 2–221 (CGIIGIVSLR…DDELGFITPE (220 aa)). 2 SIS domains span residues 286–426 (VIEE…KMEK) and 445–579 (IGEE…PDKP). Lys-584 serves as the catalytic For Fru-6P isomerization activity.

In terms of assembly, homodimer.

It localises to the cytoplasm. It carries out the reaction D-fructose 6-phosphate + L-glutamine = D-glucosamine 6-phosphate + L-glutamate. Catalyzes the first step in hexosamine metabolism, converting fructose-6P into glucosamine-6P using glutamine as a nitrogen source. The polypeptide is Glutamine--fructose-6-phosphate aminotransferase [isomerizing] (Sulfurisphaera tokodaii (strain DSM 16993 / JCM 10545 / NBRC 100140 / 7) (Sulfolobus tokodaii)).